An 89-amino-acid chain; its full sequence is Small ribosomal subunit protein eS25A (89 aa).

This sequence belongs to the eukaryotic ribosomal protein eS25 family. In terms of assembly, component of the small ribosomal subunit (SSU). Mature yeast ribosomes consist of a small (40S) and a large (60S) subunit. The 40S small subunit contains 1 molecule of ribosomal RNA (18S rRNA) and at least 33 different proteins. The large 60S subunit contains 3 rRNA molecules (25S, 5.8S and 5S rRNA) and at least 46 different proteins.

It localises to the cytoplasm. In terms of biological role, component of the ribosome, a large ribonucleoprotein complex responsible for the synthesis of proteins in the cell. The small ribosomal subunit (SSU) binds messenger RNAs (mRNAs) and translates the encoded message by selecting cognate aminoacyl-transfer RNA (tRNA) molecules. The large subunit (LSU) contains the ribosomal catalytic site termed the peptidyl transferase center (PTC), which catalyzes the formation of peptide bonds, thereby polymerizing the amino acids delivered by tRNAs into a polypeptide chain. The nascent polypeptides leave the ribosome through a tunnel in the LSU and interact with protein factors that function in enzymatic processing, targeting, and the membrane insertion of nascent chains at the exit of the ribosomal tunnel. The sequence is that of Small ribosomal subunit protein eS25A (rps2502) from Schizosaccharomyces pombe (strain 972 / ATCC 24843) (Fission yeast).